A 331-amino-acid polypeptide reads, in one-letter code: DNA-directed RNA polymerase subunit alpha (331 aa).

The tract at residues 1–235 (MTMHIRWRGM…KHLNPFVQYR (235 aa)) is alpha N-terminal domain (alpha-NTD). Residues 255 to 331 (QLEAKLNMTL…GMRVPNQPLF (77 aa)) are alpha C-terminal domain (alpha-CTD).

Belongs to the RNA polymerase alpha chain family. In terms of assembly, homodimer. The RNAP catalytic core consists of 2 alpha, 1 beta, 1 beta' and 1 omega subunit. When a sigma factor is associated with the core the holoenzyme is formed, which can initiate transcription.

The catalysed reaction is RNA(n) + a ribonucleoside 5'-triphosphate = RNA(n+1) + diphosphate. Functionally, DNA-dependent RNA polymerase catalyzes the transcription of DNA into RNA using the four ribonucleoside triphosphates as substrates. The protein is DNA-directed RNA polymerase subunit alpha of Rhodopirellula baltica (strain DSM 10527 / NCIMB 13988 / SH1).